We begin with the raw amino-acid sequence, 206 residues long: Large ribosomal subunit protein uL4 (206 aa).

Residues 65 to 85 (KQKGSGGARHGDRKAPQFRGG) form a disordered region.

Belongs to the universal ribosomal protein uL4 family. Part of the 50S ribosomal subunit.

In terms of biological role, one of the primary rRNA binding proteins, this protein initially binds near the 5'-end of the 23S rRNA. It is important during the early stages of 50S assembly. It makes multiple contacts with different domains of the 23S rRNA in the assembled 50S subunit and ribosome. Forms part of the polypeptide exit tunnel. The protein is Large ribosomal subunit protein uL4 of Parvibaculum lavamentivorans (strain DS-1 / DSM 13023 / NCIMB 13966).